We begin with the raw amino-acid sequence, 224 residues long: Cytidylate kinase (224 aa).

11–19 (GPAAAGKST) contributes to the ATP binding site.

Belongs to the cytidylate kinase family. Type 1 subfamily.

The protein resides in the cytoplasm. The catalysed reaction is CMP + ATP = CDP + ADP. It carries out the reaction dCMP + ATP = dCDP + ADP. This chain is Cytidylate kinase, found in Listeria monocytogenes serotype 4b (strain CLIP80459).